A 306-amino-acid chain; its full sequence is MKISLVVPVFNEEEAIPIFYKTVREFEELKSYEVEIVFINDGSKDATESIINALAVSDPLVVPLSFTRNFGKEPALFAGLDHATGDAIIPIDVDLQDPIEVIPHLIEKWQAGADMVLAKRSDRSTDGRLKRKTAEWFYKLHNKISNPKIEENVGDFRLMSRDVVENIKLMPERNLFMKGILSWVGGKTDIVEYVRAERIAGDTKFNGWKLWNLALEGITSFSTFPLRIWTYIGLVVASVAFIYGAWMILDTIIFGNAVRGYPSLLVSILFLGGIQMIGIGVLGEYIGRTYIETKKRPKYIIKRVKK.

Residues 1–227 (MKISLVVPVF…ITSFSTFPLR (227 aa)) are Cytoplasmic-facing. The helical transmembrane segment at 228 to 248 (IWTYIGLVVASVAFIYGAWMI) threads the bilayer. Residues 249–262 (LDTIIFGNAVRGYP) are Periplasmic-facing. Residues 263-283 (SLLVSILFLGGIQMIGIGVLG) traverse the membrane as a helical segment. At 284–306 (EYIGRTYIETKKRPKYIIKRVKK) the chain is on the cytoplasmic side.

It belongs to the glycosyltransferase 2 family. GtrB subfamily.

Its subcellular location is the cell inner membrane. Its function is as follows. Involved in O antigen modification. Catalyzes the transfer of the glucose residue from UDP-glucose to a lipid carrier. In Escherichia coli (strain K12), this protein is Prophage bactoprenol glucosyl transferase homolog (yfdH).